A 356-amino-acid chain; its full sequence is Replication factor C subunit 3 (356 aa).

Residue lysine 20 is modified to N6-acetyllysine. Serine 125 bears the Phosphoserine mark.

It belongs to the activator 1 small subunits family. As to quaternary structure, subunit of the RFC complex, an heteropentameric complex consisting of a large subunit RFC1 and four small subunits RFC2, RFC3, RFC4 and RFC5; the RFC complex interacts with PCNA. Forms an heterotetrameric complex with RFC2, RFC4 and RFC5; this complex has ATPase activity but is not stimulated by PCNA. The heterotetramer of subunits RFC2, RFC3, RFC4 and RFC5 interacts with RAD17. Interacts with CNTD1; this interaction facilitates crossover formation.

It is found in the nucleus. Its function is as follows. Subunit of the replication factor C (RFC) complex which acts during elongation of primed DNA templates by DNA polymerases delta and epsilon, and is necessary for ATP-dependent loading of proliferating cell nuclear antigen (PCNA) onto primed DNA. This chain is Replication factor C subunit 3 (RFC3), found in Homo sapiens (Human).